A 362-amino-acid polypeptide reads, in one-letter code: Glutamate 5-kinase (362 aa).

ATP is bound at residue Lys-3. Residues Ser-43, Asp-128, and Asn-140 each coordinate substrate. ATP contacts are provided by residues 160–161 (TD) and 202–208 (TGGMRTK). Positions 267–348 (AGAILVDAGA…REIENVLGYS (82 aa)) constitute a PUA domain.

It belongs to the glutamate 5-kinase family.

The protein resides in the cytoplasm. It catalyses the reaction L-glutamate + ATP = L-glutamyl 5-phosphate + ADP. Its pathway is amino-acid biosynthesis; L-proline biosynthesis; L-glutamate 5-semialdehyde from L-glutamate: step 1/2. In terms of biological role, catalyzes the transfer of a phosphate group to glutamate to form L-glutamate 5-phosphate. This is Glutamate 5-kinase from Xanthomonas oryzae pv. oryzae (strain KACC10331 / KXO85).